The sequence spans 205 residues: Protein-L-isoaspartate O-methyltransferase (205 aa).

Ser56 is a catalytic residue.

The protein belongs to the methyltransferase superfamily. L-isoaspartyl/D-aspartyl protein methyltransferase family.

The protein localises to the cytoplasm. The catalysed reaction is [protein]-L-isoaspartate + S-adenosyl-L-methionine = [protein]-L-isoaspartate alpha-methyl ester + S-adenosyl-L-homocysteine. Its function is as follows. Catalyzes the methyl esterification of L-isoaspartyl residues in peptides and proteins that result from spontaneous decomposition of normal L-aspartyl and L-asparaginyl residues. It plays a role in the repair and/or degradation of damaged proteins. The polypeptide is Protein-L-isoaspartate O-methyltransferase (Aeromonas hydrophila subsp. hydrophila (strain ATCC 7966 / DSM 30187 / BCRC 13018 / CCUG 14551 / JCM 1027 / KCTC 2358 / NCIMB 9240 / NCTC 8049)).